The sequence spans 504 residues: ATP synthase subunit alpha 1 (504 aa).

170-177 contributes to the ATP binding site; sequence GDRQIGKT.

It belongs to the ATPase alpha/beta chains family. In terms of assembly, F-type ATPases have 2 components, CF(1) - the catalytic core - and CF(0) - the membrane proton channel. CF(1) has five subunits: alpha(3), beta(3), gamma(1), delta(1), epsilon(1). CF(0) has three main subunits: a(1), b(2) and c(9-12). The alpha and beta chains form an alternating ring which encloses part of the gamma chain. CF(1) is attached to CF(0) by a central stalk formed by the gamma and epsilon chains, while a peripheral stalk is formed by the delta and b chains.

It is found in the cell inner membrane. It catalyses the reaction ATP + H2O + 4 H(+)(in) = ADP + phosphate + 5 H(+)(out). Functionally, produces ATP from ADP in the presence of a proton gradient across the membrane. The alpha chain is a regulatory subunit. This is ATP synthase subunit alpha 1 from Syntrophus aciditrophicus (strain SB).